We begin with the raw amino-acid sequence, 1171 residues long: WD repeat-containing protein on Y chromosome (1171 aa).

8 WD repeats span residues 157 to 201, 331 to 370, 374 to 413, 464 to 503, 516 to 555, 603 to 643, 748 to 787, and 831 to 870; these read EIPE…LRSA, RIPL…EPSA, GHNG…LLQT, THAA…RKII, IIDI…VVRN, FHTD…RRYN, KVGD…IPQA, and GHLK…LGTL. A disordered region spans residues 1076-1171; sequence RTSFTLSDYT…TNTMKSSNSH (96 aa). Polar residues-rich tracts occupy residues 1094 to 1106 and 1161 to 1171; these read SSRN…SSGS and KTNTMKSSNSH.

The sequence is that of WD repeat-containing protein on Y chromosome from Drosophila grimshawi (Hawaiian fruit fly).